Reading from the N-terminus, the 148-residue chain is Large ribosomal subunit protein uL15 (148 aa).

Positions 1 to 61 (MELNNLKPAI…GGQMPMQRRL (61 aa)) are disordered. Positions 30–39 (TATKGHKGQK) are enriched in basic residues.

The protein belongs to the universal ribosomal protein uL15 family. Part of the 50S ribosomal subunit.

Its function is as follows. Binds to the 23S rRNA. In Geobacter metallireducens (strain ATCC 53774 / DSM 7210 / GS-15), this protein is Large ribosomal subunit protein uL15.